The sequence spans 193 residues: Ion-translocating oxidoreductase complex subunit A (193 aa).

The next 6 helical transmembrane spans lie at 5–25 (LLLL…FLGL), 39–59 (IGMG…SYLM), 63–83 (ILIP…VIAV), 102–122 (LLGI…VALL), 134–154 (IIYG…FAAM), and 171–191 (SIAM…TGLI).

The protein belongs to the NqrDE/RnfAE family. As to quaternary structure, the complex is composed of six subunits: RnfA, RnfB, RnfC, RnfD, RnfE and RnfG.

Its subcellular location is the cell inner membrane. Functionally, part of a membrane-bound complex that couples electron transfer with translocation of ions across the membrane. This chain is Ion-translocating oxidoreductase complex subunit A, found in Aeromonas hydrophila subsp. hydrophila (strain ATCC 7966 / DSM 30187 / BCRC 13018 / CCUG 14551 / JCM 1027 / KCTC 2358 / NCIMB 9240 / NCTC 8049).